The following is a 109-amino-acid chain: Nucleoid-associated protein BCE_0021 (109 aa).

Belongs to the YbaB/EbfC family. In terms of assembly, homodimer.

Its subcellular location is the cytoplasm. It is found in the nucleoid. In terms of biological role, binds to DNA and alters its conformation. May be involved in regulation of gene expression, nucleoid organization and DNA protection. The protein is Nucleoid-associated protein BCE_0021 of Bacillus cereus (strain ATCC 10987 / NRS 248).